Here is a 107-residue protein sequence, read N- to C-terminus: Iron-binding protein IscA (107 aa).

Fe cation-binding residues include C35, C99, and C101.

The protein belongs to the HesB/IscA family. As to quaternary structure, homodimer; may form tetramers and higher multimers. Fe cation serves as cofactor.

Is able to transfer iron-sulfur clusters to apo-ferredoxin. Multiple cycles of [2Fe2S] cluster formation and transfer are observed, suggesting that IscA acts catalytically. Recruits intracellular free iron so as to provide iron for the assembly of transient iron-sulfur cluster in IscU in the presence of IscS, L-cysteine and the thioredoxin reductase system TrxA/TrxB. This is Iron-binding protein IscA from Yersinia pestis bv. Antiqua (strain Angola).